The sequence spans 1058 residues: Leucine--tRNA ligase, cytoplasmic (1058 aa).

The 'HIGH' region motif lies at 48 to 58; sequence PYMNGRLHVGH. The 'KMSKS' region motif lies at 711–715; the sequence is KMSKS. K714 is a binding site for ATP.

This sequence belongs to the class-I aminoacyl-tRNA synthetase family.

The protein localises to the cytoplasm. The enzyme catalyses tRNA(Leu) + L-leucine + ATP = L-leucyl-tRNA(Leu) + AMP + diphosphate. This Dictyostelium discoideum (Social amoeba) protein is Leucine--tRNA ligase, cytoplasmic (leuS).